The sequence spans 1077 residues: ATP-dependent helicase/deoxyribonuclease subunit B (1077 aa).

It belongs to the helicase family. AddB/RexB type 2 subfamily. As to quaternary structure, heterodimer of AddA and RexB. Mg(2+) is required as a cofactor.

Its function is as follows. The heterodimer acts as both an ATP-dependent DNA helicase and an ATP-dependent, dual-direction single-stranded exonuclease. Recognizes the chi site generating a DNA molecule suitable for the initiation of homologous recombination. This subunit has 5' -&gt; 3' nuclease activity but not helicase activity. The protein is ATP-dependent helicase/deoxyribonuclease subunit B of Streptococcus agalactiae serotype III (strain NEM316).